A 500-amino-acid chain; its full sequence is Cobyric acid synthase (500 aa).

Positions 255–444 (AIDIAVIRCP…MHDLFHNDAF (190 aa)) constitute a GATase cobBQ-type domain. The active-site Nucleophile is cysteine 337. The active site involves histidine 436.

Belongs to the CobB/CobQ family. CobQ subfamily.

Its pathway is cofactor biosynthesis; adenosylcobalamin biosynthesis. In terms of biological role, catalyzes amidations at positions B, D, E, and G on adenosylcobyrinic A,C-diamide. NH(2) groups are provided by glutamine, and one molecule of ATP is hydrogenolyzed for each amidation. The chain is Cobyric acid synthase from Geobacillus thermodenitrificans (strain NG80-2).